The sequence spans 95 residues: Aspartyl/glutamyl-tRNA(Asn/Gln) amidotransferase subunit C (95 aa).

The protein belongs to the GatC family. Heterotrimer of A, B and C subunits.

The enzyme catalyses L-glutamyl-tRNA(Gln) + L-glutamine + ATP + H2O = L-glutaminyl-tRNA(Gln) + L-glutamate + ADP + phosphate + H(+). It catalyses the reaction L-aspartyl-tRNA(Asn) + L-glutamine + ATP + H2O = L-asparaginyl-tRNA(Asn) + L-glutamate + ADP + phosphate + 2 H(+). In terms of biological role, allows the formation of correctly charged Asn-tRNA(Asn) or Gln-tRNA(Gln) through the transamidation of misacylated Asp-tRNA(Asn) or Glu-tRNA(Gln) in organisms which lack either or both of asparaginyl-tRNA or glutaminyl-tRNA synthetases. The reaction takes place in the presence of glutamine and ATP through an activated phospho-Asp-tRNA(Asn) or phospho-Glu-tRNA(Gln). This chain is Aspartyl/glutamyl-tRNA(Asn/Gln) amidotransferase subunit C, found in Chromohalobacter salexigens (strain ATCC BAA-138 / DSM 3043 / CIP 106854 / NCIMB 13768 / 1H11).